The sequence spans 785 residues: Rho-GTPase-activating protein RGD3 (785 aa).

Position 2 is an N-acetylserine (serine 2). In terms of domain architecture, F-BAR spans 31–463 (ISLRNTYWTK…PQETANADVR (433 aa)). Positions 313-340 (SNGNAGNRKKKSYGELTHSDNEHEEKSN) are disordered. Basic and acidic residues predominate over residues 329–339 (THSDNEHEEKS). In terms of domain architecture, Rho-GAP spans 520–702 (IILRQIEKEP…TFFINERTVE (183 aa)). The segment at 732-785 (TAPIHSTPKPPPNDKDGHFIPRPFKTSSTPTTPERPKRKSGLFLPINVNDVPST) is disordered. Position 759 is a phosphoserine (serine 759). Threonine 760, threonine 762, and threonine 763 each carry phosphothreonine.

Post-translationally, phosphorylation at the C-terminus negatively regulates the activity and the polarized localization.

The protein resides in the cytoplasmic vesicle membrane. The protein localises to the cell membrane. It localises to the bud tip. Its subcellular location is the bud neck. In terms of biological role, GTPase activating protein (GAP) for RHO3 and CDC42 that binds membranes through phosphatidylinositol 4,5-bisphosphate. Plays a key role in cell polarity. Modulates the RHO3 distribution at the plasma membrane and its polarity during growth. The chain is Rho-GTPase-activating protein RGD3 from Saccharomyces cerevisiae (strain ATCC 204508 / S288c) (Baker's yeast).